The following is a 389-amino-acid chain: Na(+)/H(+) antiporter NhaA 1 (389 aa).

The next 11 helical transmembrane spans lie at 12-32, 62-82, 97-117, 128-148, 157-177, 184-204, 220-240, 260-280, 282-302, 331-351, and 365-385; these read VLNEAFGGVLLIVCTLLALLV, FLLWINDGLISIFFFAIGLEL, IVLPFMAALGGILIPAMLFAL, GWAIPTATDTAFALAILMMCG, IFLLSLAIFDDVGAILIIAIF, IVAFVVAGLAILAMLILNLLG, ISVLKSGVHATLAGIVTAFFI, FWIAFIILPLFAFANAGVNLS, IDIGAIFSGVSIGIFLGLFVG, LYGVCILTGIGFTMSLFIDGL, and LAILIASFCSGIWGFIYLKFF.

Belongs to the NhaA Na(+)/H(+) (TC 2.A.33) antiporter family.

It is found in the cell inner membrane. The catalysed reaction is Na(+)(in) + 2 H(+)(out) = Na(+)(out) + 2 H(+)(in). Na(+)/H(+) antiporter that extrudes sodium in exchange for external protons. In Campylobacter jejuni (strain RM1221), this protein is Na(+)/H(+) antiporter NhaA 1.